Reading from the N-terminus, the 1259-residue chain is Autism susceptibility gene 2 protein (1259 aa).

5 disordered regions span residues 1 to 87, 108 to 285, 299 to 470, 771 to 1027, and 1119 to 1146; these read MDGP…EEDI, LKPQ…QDCC, CPQV…PPPP, PNSM…MTVG, and REPH…HERG. Basic residues predominate over residues 8–17; the sequence is HGLRKKRRSR. Residues 28–41 are compositionally biased toward gly residues; sequence GGLGAGAAGGGGAG. Residues 108–118 show a composition bias toward basic and acidic residues; the sequence is LKPQERVEKRQ. Residues 136–147 are compositionally biased toward basic residues; it reads HSKKSRLSHPHH. The span at 148 to 158 shows a compositional bias: basic and acidic residues; the sequence is YSSDRENDRNL. The span at 177 to 192 shows a compositional bias: polar residues; sequence PGQNSCRDSDSESASG. A compositionally biased stretch (basic and acidic residues) spans 276 to 285; the sequence is RSQEKSQDCC. The interval 289–472 is important for regulation of lamellipodia formation; sequence IFEPVVLKDP…PTALPPPPPL (184 aa). Pro residues-rich tracts occupy residues 331–345 and 353–365; these read PPQP…PQGP and APQP…PRPQ. Over residues 386–410 the composition is skewed to low complexity; sequence SLSQPLSAYNSSSLSLNSLSSSRSS. Polar residues predominate over residues 436-447; it reads PNHSPLHSFTPT. Positions 801 to 810 are enriched in pro residues; that stretch reads PSFPTPPPWL. 3 stretches are compositionally biased toward basic and acidic residues: residues 813-850, 876-935, and 960-993; these read GELE…VEKR, IRAH…EAKQ, and REAE…HDLP. Over residues 1125-1134 the composition is skewed to basic residues; the sequence is SHHHHHHHHP. Phosphoserine occurs at positions 1198 and 1233. The disordered stretch occupies residues 1217–1259; that stretch reads LSAPPPLISTLGGRPVSPRRTTPLSAEIRERPPSHTLKDIEAR. Positions 1243–1259 are enriched in basic and acidic residues; sequence EIRERPPSHTLKDIEAR.

It belongs to the AUTS2 family. In terms of assembly, component of a PRC1-like complex that contains PCGF5, RNF2, CSNK2B, RYBP and AUTS2. Within this complex, interacts directly with PCGF5 and CSNK2B. Interacts with the histone acetyltransferase EP300/p300. Interacts (via Pro-rich region) with PREX1, DOCK1 and ELMO2. In terms of tissue distribution, strongly expressed in brain, skeletal muscle and kidney. Also expressed in placenta, lung and leukocytes.

The protein localises to the nucleus. The protein resides in the cytoplasm. It localises to the cytoskeleton. It is found in the cell projection. Its subcellular location is the growth cone. Its function is as follows. Component of a Polycomb group (PcG) multiprotein PRC1-like complex, a complex class required to maintain the transcriptionally repressive state of many genes, including Hox genes, throughout development. PcG PRC1 complex acts via chromatin remodeling and modification of histones; it mediates monoubiquitination of histone H2A 'Lys-119', rendering chromatin heritably changed in its expressibility. The PRC1-like complex that contains PCGF5, RNF2, CSNK2B, RYBP and AUTS2 has decreased histone H2A ubiquitination activity, due to the phosphorylation of RNF2 by CSNK2B. As a consequence, the complex mediates transcriptional activation. In the cytoplasm, plays a role in axon and dendrite elongation and in neuronal migration during embryonic brain development. Promotes reorganization of the actin cytoskeleton, lamellipodia formation and neurite elongation via its interaction with RAC guanine nucleotide exchange factors, which then leads to the activation of RAC1. This is Autism susceptibility gene 2 protein (AUTS2) from Homo sapiens (Human).